A 350-amino-acid chain; its full sequence is 3'-hydroxy-N-methyl-(S)-coclaurine 4'-O-methyltransferase (350 aa).

Residues Gly-196, Asp-219, Asp-239, Met-240, and Lys-253 each coordinate S-adenosyl-L-methionine. His-257 (proton acceptor) is an active-site residue.

It belongs to the class I-like SAM-binding methyltransferase superfamily. Cation-independent O-methyltransferase family. COMT subfamily. As to quaternary structure, homodimer.

It catalyses the reaction (S)-3'-hydroxy-N-methylcoclaurine + S-adenosyl-L-methionine = (S)-reticuline + S-adenosyl-L-homocysteine + H(+). It participates in alkaloid biosynthesis; (S)-reticuline biosynthesis; (S)-reticuline from (S)-norcoclaurine: step 4/4. Its function is as follows. Catalyzes the transfer of the methyl group to the 4'-hydroxyl group of 3'-hydroxy-N-methylcoclaurine to form reticuline. This is 3'-hydroxy-N-methyl-(S)-coclaurine 4'-O-methyltransferase from Coptis japonica (Japanese goldthread).